The following is a 442-amino-acid chain: Protein cereblon (442 aa).

A disordered region spans residues 1-45 (MAGEGDQQDAAHNMGNHLPLLPAESEEEDEMEVEDQDSKEAKKPN). Positions 24 to 35 (ESEEEDEMEVED) are enriched in acidic residues. A Phosphoserine modification is found at serine 25. The 239-residue stretch at 81-319 (IPVLPQVMMI…CELDIMNKCT (239 aa)) folds into the Lon N-terminal domain. In terms of domain architecture, CULT spans 318 to 426 (CTSLCCKQCQ…LTRSALLPTI (109 aa)). Cysteine 323 and cysteine 326 together coordinate Zn(2+). Histidine 378, tryptophan 380, and tryptophan 386 together coordinate (S)-thalidomide. Positions 391 and 394 each coordinate Zn(2+).

It belongs to the CRBN family. As to quaternary structure, interacts with KCNT1. Component of a DCX (DDB1-CUL4-X-box) protein ligase complex, at least composed of CRBN, CUL4A, DDB1 and RBX1. Interacts directly with DDB1. Interacts (in pomalidomide-bound form) with IKZF1 and IKZF3. Interacts with ILF2. Interacts with TRAF6 and ECSIT. Post-translationally, ubiquitinated, ubiquitination is mediated by its own DCX protein ligase complex. Widely expressed. Highly expressed in brain.

It is found in the cytoplasm. The protein localises to the nucleus. Its subcellular location is the membrane. The protein operates within protein modification; protein ubiquitination. Substrate recognition component of a DCX (DDB1-CUL4-X-box) E3 protein ligase complex that mediates the ubiquitination and subsequent proteasomal degradation of target proteins, such as MEIS2, ILF2 or GLUL. Normal degradation of key regulatory proteins is required for normal limb outgrowth and expression of the fibroblast growth factor FGF8. Maintains presynaptic glutamate release and consequently cognitive functions, such as memory and learning, by negatively regulating large-conductance calcium-activated potassium (BK) channels in excitatory neurons. Likely to function by regulating the assembly and neuronal surface expression of BK channels via its interaction with KCNT1. May also be involved in regulating anxiety-like behaviors via a BK channel-independent mechanism. Plays a negative role in TLR4 signaling by interacting with TRAF6 and ECSIT, leading to inhibition of ECSIT ubiquitination, an important step of the signaling. This Homo sapiens (Human) protein is Protein cereblon (CRBN).